A 379-amino-acid polypeptide reads, in one-letter code: tRNA (guanine(26)-N(2))-dimethyltransferase (379 aa).

Residues 4-375 enclose the Trm1 methyltransferase domain; that stretch reads VEVLEGKAKI…APYEVFVNVL (372 aa). S-adenosyl-L-methionine is bound by residues Arg36, Arg61, Asp78, Asp120, and Ala121.

Belongs to the class I-like SAM-binding methyltransferase superfamily. Trm1 family.

The enzyme catalyses guanosine(26) in tRNA + 2 S-adenosyl-L-methionine = N(2)-dimethylguanosine(26) in tRNA + 2 S-adenosyl-L-homocysteine + 2 H(+). In terms of biological role, dimethylates a single guanine residue at position 26 of a number of tRNAs using S-adenosyl-L-methionine as donor of the methyl groups. The chain is tRNA (guanine(26)-N(2))-dimethyltransferase from Pyrococcus abyssi (strain GE5 / Orsay).